Here is a 534-residue protein sequence, read N- to C-terminus: Cytokine-like nuclear factor N-PAC (534 aa).

The PWWP domain maps to 8–66; that stretch reads QGDLVWGKLGRYPPWPGKIVNPPKDLKKPRGKKCLFVKFFGTEDHAWIKVEQLKPYHAH. Basic and acidic residues-rich tracts occupy residues 93–122 and 138–157; these read AKAK…QTGE and RSRD…DKDS. Residues 93 to 168 form a disordered region; it reads AKAKEHAKEH…SPQPSSLKKL (76 aa). Positions 144-156 form a DNA-binding region, a.T hook; it reads PRKRGRPPKDDKD. An interaction with histone H3 region spans residues 190–193; sequence DSWL. A dehydrogenase domain region spans residues 242-534; it reads GNIIPTDKKI…MSAVYRAYIH (293 aa). Residues 252-266, threonine 343, and lysine 486 each bind NAD(+); that span reads GFLG…IVSN.

This sequence belongs to the HIBADH-related family. NP60 subfamily. As to quaternary structure, homotetramere. Binds to mononucleosomes.

Its subcellular location is the nucleus. The protein resides in the chromosome. Functionally, cytokine-like nuclear factor with chromatin gene reader activity involved in chromatin modification and regulation of gene expression. Acts as a nucleosome-destabilizing factor that is recruited to genes during transcriptional activation. Recognizes and binds histone H3 without a preference for specific epigenetic markers and also binds DNA. Interacts with KDM1B and promotes its histone demethylase activity by facilitating the capture of H3 tails, they form a multifunctional enzyme complex that modifies transcribed chromatin and facilitates Pol II transcription through nucleosomes. In Xenopus tropicalis (Western clawed frog), this protein is Cytokine-like nuclear factor N-PAC (glyr1).